A 559-amino-acid chain; its full sequence is Tissue-type plasminogen activator (559 aa).

The first 17 residues, 1 to 17 (MKRELLCVLLLCGLAFP), serve as a signal peptide directing secretion. The propeptide occupies 18–29 (LPDQGIHGRFRR). Positions 30–32 (GAR) are cleaved as a propeptide — removed by plasmin. The 43-residue stretch at 36–78 (ATCRDEPTQTTYQQHQSWLRPMLRSSRVEYCRCNSGLVQCHSV) folds into the Fibronectin type-I domain. Cystine bridges form between Cys-38-Cys-68, Cys-66-Cys-75, Cys-83-Cys-94, Cys-88-Cys-105, Cys-107-Cys-116, Cys-124-Cys-205, Cys-145-Cys-187, Cys-176-Cys-200, Cys-213-Cys-294, Cys-234-Cys-276, Cys-265-Cys-289, Cys-297-Cys-428, Cys-340-Cys-356, Cys-348-Cys-417, Cys-442-Cys-516, Cys-474-Cys-490, and Cys-506-Cys-534. The important for binding to annexin A2 stretch occupies residues 39–49 (RDEPTQTTYQQ). Residues 79–117 (PVRSCSEPRCFNGGTCQQALYFSDFVCQCPDGFVGKRCD) enclose the EGF-like domain. 2 consecutive Kringle domains span residues 124 to 205 (CFEE…TPAC) and 213 to 294 (CYVG…MSPC). Asn-149 carries an N-linked (GlcNAc...) asparagine glycan. Residues 309-558 (IKGGLYTDIT…YLDWIHDNMK (250 aa)) form the Peptidase S1 domain. Residues His-355 and Asp-404 each act as charge relay system in the active site. Residue Asn-481 is glycosylated (N-linked (GlcNAc...) asparagine). Ser-510 functions as the Charge relay system in the catalytic mechanism.

This sequence belongs to the peptidase S1 family. As to quaternary structure, heterodimer of chain A and chain B held by a disulfide bond. Binds to fibrin with high affinity. This interaction leads to an increase in the catalytic efficiency of the enzyme due to an increase in affinity for plasminogen. Similarly, binding to heparin increases the activation of plasminogen. Binds to annexin A2, cytokeratin-8, fibronectin and laminin. Binds to mannose receptor and the low-density lipoprotein receptor-related protein (LRP1); these proteins are involved in TPA clearance. Binds LRP1B; binding is followed by internalization and degradation. Forms heterodimer with SERPINA5. Interacts with SERPINE1. In complex with SERPINE1, interacts with SORL1. In terms of processing, the single chain, almost fully active enzyme, can be further processed into a two-chain fully active form by a cleavage after Arg-308 catalyzed by plasmin, tissue kallikrein or factor Xa.

Its subcellular location is the secreted. The protein resides in the extracellular space. The enzyme catalyses Specific cleavage of Arg-|-Val bond in plasminogen to form plasmin.. With respect to regulation, inhibited by SERPINA5. Inhibited by SERPINE1. Functionally, converts the abundant, but inactive, zymogen plasminogen to plasmin by hydrolyzing a single Arg-Val bond in plasminogen. By controlling plasmin-mediated proteolysis, it plays an important role in tissue remodeling and degradation, in cell migration and many other physiopathological events. During oocyte activation, plays a role in cortical granule reaction in the zona reaction, which contributes to the block to polyspermy. In Mus musculus (Mouse), this protein is Tissue-type plasminogen activator (Plat).